Here is a 381-residue protein sequence, read N- to C-terminus: Methanesulfonate monooxygenase (381 aa).

This sequence belongs to the SsuD family.

It carries out the reaction an alkanesulfonate + FMNH2 + O2 = an aldehyde + FMN + sulfite + H2O + 2 H(+). In terms of biological role, catalyzes the desulfonation of aliphatic sulfonates. Shows highest activity with methanesulfonate. The polypeptide is Methanesulfonate monooxygenase (msuD) (Pseudomonas aeruginosa (strain ATCC 15692 / DSM 22644 / CIP 104116 / JCM 14847 / LMG 12228 / 1C / PRS 101 / PAO1)).